The chain runs to 48 residues: uncharacterized protein (48 aa).

This is an uncharacterized protein from Treponema pallidum (strain Nichols).